Reading from the N-terminus, the 270-residue chain is NAD kinase (270 aa).

Catalysis depends on D45, which acts as the Proton acceptor. NAD(+) contacts are provided by residues D45 to G46, N121 to E122, R147, D149, T160 to S165, and A184.

The protein belongs to the NAD kinase family. A divalent metal cation is required as a cofactor.

It localises to the cytoplasm. It catalyses the reaction NAD(+) + ATP = ADP + NADP(+) + H(+). Functionally, involved in the regulation of the intracellular balance of NAD and NADP, and is a key enzyme in the biosynthesis of NADP. Catalyzes specifically the phosphorylation on 2'-hydroxyl of the adenosine moiety of NAD to yield NADP. This chain is NAD kinase, found in Lactobacillus helveticus (strain DPC 4571).